A 107-amino-acid chain; its full sequence is Proteinase inhibitor I-A (107 aa).

Residues 1-22 (MVKFAHVVAFLLLASLIQPLTA) form the signal peptide. The propeptide occupies 23-36 (RDLEINVLQLDVSQ).

The protein belongs to the protease inhibitor I13 (potato type I serine protease inhibitor) family.

It localises to the secreted. The polypeptide is Proteinase inhibitor I-A (TIMPB) (Nicotiana tabacum (Common tobacco)).